Consider the following 944-residue polypeptide: Probable UDP-N-acetylglucosamine--peptide N-acetylglucosaminyltransferase SPINDLY (944 aa).

11 TPR repeats span residues 34–67, 68–101, 102–135, 143–176, 177–210, 211–244, 252–285, 286–319, 320–353, 355–387, and 388–421; these read GTDALRYANILRSRNKFADALQLYTTVLDKDGAN, VEALIGKGICLQAQSLPRQALDCFTEAVKVDPKN, ACALTHCGMIYKDEGHLVEAAEAYQKARSADPSY, AIVLTDLGTSLKLAGNTEDGIQKYCEALEVDSHY, APAYYNLGVVYSEMMQFDVALTCYEKAALERPLY, AEAYCNMGVIYKNRGELDAAIACYDRCLTISPNF, AIALTDLGTKVKIEGDINQGVAYYKKALFYNWHY, ADAMYNLGVAYGEMLNFEMAIVFYELALHFNPRC, AEACNNLGVIYKDRDNLDKAVECYQMALSIKPNF, QSLNNLGVVYTVQGKMDAAASMIEKAILANPTY, and AEAYNNLGVLYRDAGSITLSVQAYERCLQIDPDS. The tract at residues 422-944 is catalytic region; that stretch reads RNAGQNRLLA…RCEANGHSSR (523 aa). The tract at residues 873–944 is disordered; the sequence is NATAEEDNQS…RCEANGHSSR (72 aa). Residues 897–911 show a composition bias toward polar residues; the sequence is PQPQIMVNGVTSPEG.

It belongs to the glycosyltransferase 41 family. O-GlcNAc transferase subfamily. As to expression, expressed in all parts of plants, including immature leaf blade, leaf sheath, mature leaf blade, roots, germinating embryos and aleurone layers.

Its subcellular location is the nucleus. The enzyme catalyses L-seryl-[protein] + UDP-N-acetyl-alpha-D-glucosamine = 3-O-(N-acetyl-beta-D-glucosaminyl)-L-seryl-[protein] + UDP + H(+). It catalyses the reaction L-threonyl-[protein] + UDP-N-acetyl-alpha-D-glucosamine = 3-O-(N-acetyl-beta-D-glucosaminyl)-L-threonyl-[protein] + UDP + H(+). It functions in the pathway protein modification; protein glycosylation. Functionally, probable O-linked N-acetylglucosamine transferase (OGT) involved in various processes such as gibberellin (GA) signaling pathway. OGTs catalyze the addition of nucleotide-activated sugars directly onto the polypeptide through O-glycosidic linkage with the hydroxyl of serine or threonine. Probably acts by adding O-linked sugars to yet unknown proteins. In Hordeum vulgare (Barley), this protein is Probable UDP-N-acetylglucosamine--peptide N-acetylglucosaminyltransferase SPINDLY (SPY).